The chain runs to 248 residues: Proteasome subunit alpha type-5 (248 aa).

It belongs to the peptidase T1A family. As to quaternary structure, the 26S proteasome consists of a 20S proteasome core and two 19S regulatory subunits. The 20S proteasome core is composed of 28 subunits that are arranged in four stacked rings, resulting in a barrel-shaped structure. The two end rings are each formed by seven alpha subunits, and the two central rings are each formed by seven beta subunits. The catalytic chamber with the active sites is on the inside of the barrel.

The protein resides in the cytoplasm. It is found in the nucleus. Functionally, the proteasome is a multicatalytic proteinase complex which is characterized by its ability to cleave peptides with Arg, Phe, Tyr, Leu, and Glu adjacent to the leaving group at neutral or slightly basic pH. The proteasome has an ATP-dependent proteolytic activity. This is Proteasome subunit alpha type-5 (pas-5) from Caenorhabditis elegans.